A 70-amino-acid chain; its full sequence is DNA-directed RNA polymerase subunit omega (70 aa).

It belongs to the RNA polymerase subunit omega family. In terms of assembly, the RNAP catalytic core consists of 2 alpha, 1 beta, 1 beta' and 1 omega subunit. When a sigma factor is associated with the core the holoenzyme is formed, which can initiate transcription.

The catalysed reaction is RNA(n) + a ribonucleoside 5'-triphosphate = RNA(n+1) + diphosphate. Its function is as follows. Promotes RNA polymerase assembly. Latches the N- and C-terminal regions of the beta' subunit thereby facilitating its interaction with the beta and alpha subunits. This chain is DNA-directed RNA polymerase subunit omega, found in Staphylococcus epidermidis (strain ATCC 12228 / FDA PCI 1200).